The chain runs to 504 residues: Outer capsid protein VP5 (504 aa).

An involved in membrane permeabilization region spans residues Met-1 to Glu-42.

This sequence belongs to the orbivirus VP5 family.

It is found in the virion. In terms of biological role, VP5 protein is one of the two proteins (with VP2) which constitute the virus particle outer capsid. Acts as a membrane permeabilization protein that mediates release of viral particles from endosomal compartments into the cytoplasm. Permeabilization activity is probably negatively regulated by VP2 and is triggered by endosomal degradation of VP2 and exposure to low pH. This African horse sickness virus 6 (AHSV-6) protein is Outer capsid protein VP5 (Segment-6).